The chain runs to 469 residues: Neuraminidase (469 aa).

The Intravirion portion of the chain corresponds to 1-9; sequence MNPNQKIIT. The helical transmembrane segment at 10-30 threads the bilayer; that stretch reads IGSVSLTIATVCFLMQIAILV. The tract at residues 11-33 is involved in apical transport and lipid raft association; sequence GSVSLTIATVCFLMQIAILVTTV. Over 31–469 the chain is Virion surface; the sequence is TTVTLHFRQY…DGADINLMPI (439 aa). The segment at 36 to 88 is hypervariable stalk region; sequence HFRQYECDSPANNQVMPCEPTIIERNITEIVYLNNTTIEKEICPKLVEYRNWS. 4 N-linked (GlcNAc...) asparagine; by host glycosylation sites follow: Asn61, Asn69, Asn70, and Asn86. Residues 91–469 form a head of neuraminidase region; the sequence is QCKITGFAPF…DGADINLMPI (379 aa). Cystine bridges form between Cys92/Cys417, Cys124/Cys129, Cys183/Cys230, Cys232/Cys237, Cys278/Cys291, Cys280/Cys289, Cys318/Cys337, and Cys421/Cys447. Arg118 is a substrate binding site. Asn146 carries N-linked (GlcNAc...) asparagine; by host glycosylation. Asp151 serves as the catalytic Proton donor/acceptor. Position 152 (Arg152) interacts with substrate. 2 N-linked (GlcNAc...) asparagine; by host glycosylation sites follow: Asn200 and Asn234. 276 to 277 lines the substrate pocket; that stretch reads EE. Arg292 provides a ligand contact to substrate. Ca(2+) is bound by residues Asp293, Gly297, and Asp324. Positions 323-350 are disordered; that stretch reads GDTPRNNDRSSNSNCRNPNNERGNHGVK. Over residues 331–343 the composition is skewed to low complexity; it reads RSSNSNCRNPNNE. Arg371 serves as a coordination point for substrate. Asn402 carries N-linked (GlcNAc...) asparagine; by host glycosylation. The active-site Nucleophile is the Tyr406.

The protein belongs to the glycosyl hydrolase 34 family. As to quaternary structure, homotetramer. Requires Ca(2+) as cofactor. N-glycosylated.

Its subcellular location is the virion membrane. The protein localises to the host apical cell membrane. It catalyses the reaction Hydrolysis of alpha-(2-&gt;3)-, alpha-(2-&gt;6)-, alpha-(2-&gt;8)- glycosidic linkages of terminal sialic acid residues in oligosaccharides, glycoproteins, glycolipids, colominic acid and synthetic substrates.. Inhibited by the neuraminidase inhibitors zanamivir (Relenza) and oseltamivir (Tamiflu). These drugs interfere with the release of progeny virus from infected cells and are effective against all influenza strains. Resistance to neuraminidase inhibitors is quite rare. Its function is as follows. Catalyzes the removal of terminal sialic acid residues from viral and cellular glycoconjugates. Cleaves off the terminal sialic acids on the glycosylated HA during virus budding to facilitate virus release. Additionally helps virus spread through the circulation by further removing sialic acids from the cell surface. These cleavages prevent self-aggregation and ensure the efficient spread of the progeny virus from cell to cell. Otherwise, infection would be limited to one round of replication. Described as a receptor-destroying enzyme because it cleaves a terminal sialic acid from the cellular receptors. May facilitate viral invasion of the upper airways by cleaving the sialic acid moieties on the mucin of the airway epithelial cells. Likely to plays a role in the budding process through its association with lipid rafts during intracellular transport. May additionally display a raft-association independent effect on budding. Plays a role in the determination of host range restriction on replication and virulence. Sialidase activity in late endosome/lysosome traffic seems to enhance virus replication. The chain is Neuraminidase from Aves (Human).